Here is a 1007-residue protein sequence, read N- to C-terminus: Tolloid-like protein 1 (1007 aa).

The signal sequence occupies residues Met-1–Gly-25. A propeptide spanning residues Leu-26 to Arg-142 is cleaved from the precursor. The disordered stretch occupies residues Ser-115–Arg-139. A compositionally biased stretch (polar residues) spans Gly-116–Gly-133. The region spanning Ala-143–Pro-342 is the Peptidase M12A domain. Asn-164 is a glycosylation site (N-linked (GlcNAc...) asparagine). 4 disulfide bridges follow: Cys-185–Cys-341, Cys-205–Cys-227, Cys-207–Cys-208, and Cys-344–Cys-370. Residue His-235 coordinates Zn(2+). Glu-236 is a catalytic residue. Zn(2+)-binding residues include His-239 and His-245. 2 consecutive CUB domains span residues Cys-344–Ile-456 and Cys-457–Glu-569. Residues Asn-354 and Asn-385 are each glycosylated (N-linked (GlcNAc...) asparagine). Intrachain disulfides connect Cys-397–Cys-419, Cys-457–Cys-483, Cys-510–Cys-532, Cys-573–Cys-585, Cys-581–Cys-594, Cys-596–Cys-609, Cys-613–Cys-639, Cys-666–Cys-688, Cys-729–Cys-740, Cys-736–Cys-749, Cys-751–Cys-764, Cys-769–Cys-795, Cys-822–Cys-844, Cys-882–Cys-912, and Cys-939–Cys-961. The region spanning Glu-569–Glu-610 is the EGF-like 1; calcium-binding domain. The CUB 3 domain occupies Cys-613 to Asp-725. N-linked (GlcNAc...) asparagine glycosylation is present at Asn-621. Residues Asp-725–Lys-765 enclose the EGF-like 2; calcium-binding domain. CUB domains follow at residues Cys-769–Glu-881 and Cys-882–Val-998.

The cofactor is Zn(2+).

It localises to the secreted. Functionally, protease which processes procollagen C-propeptides, such as chordin. Required for the embryonic development. Predominant protease, which in the development, influences dorsal-ventral patterning and skeletogenesis. The sequence is that of Tolloid-like protein 1 (tll1) from Xenopus laevis (African clawed frog).